Consider the following 161-residue polypeptide: NADH-quinone oxidoreductase subunit I (161 aa).

4Fe-4S ferredoxin-type domains follow at residues 53–82 (RRYPSGEERCIACKLCEAICPAQAITIEAE) and 92–121 (TRYDIDMVKCIYCGFCQEACPVDAIVEGPN). The [4Fe-4S] cluster site is built by C62, C65, C68, C72, C101, C104, C107, and C111.

This sequence belongs to the complex I 23 kDa subunit family. NDH-1 is composed of 14 different subunits. Subunits NuoA, H, J, K, L, M, N constitute the membrane sector of the complex. Requires [4Fe-4S] cluster as cofactor.

The protein resides in the cell inner membrane. It catalyses the reaction a quinone + NADH + 5 H(+)(in) = a quinol + NAD(+) + 4 H(+)(out). Its function is as follows. NDH-1 shuttles electrons from NADH, via FMN and iron-sulfur (Fe-S) centers, to quinones in the respiratory chain. The immediate electron acceptor for the enzyme in this species is believed to be ubiquinone. Couples the redox reaction to proton translocation (for every two electrons transferred, four hydrogen ions are translocated across the cytoplasmic membrane), and thus conserves the redox energy in a proton gradient. The sequence is that of NADH-quinone oxidoreductase subunit I from Hyphomonas neptunium (strain ATCC 15444).